The primary structure comprises 328 residues: UPF0285 protein Mevan_1551 (328 aa).

It belongs to the UPF0285 family.

This Methanococcus vannielii (strain ATCC 35089 / DSM 1224 / JCM 13029 / OCM 148 / SB) protein is UPF0285 protein Mevan_1551.